Here is a 358-residue protein sequence, read N- to C-terminus: Feruloyl CoA ortho-hydroxylase F6H1-2 (358 aa).

The region spanning 200-308 (TKESLLMGSK…RISVPIFVNP (109 aa)) is the Fe2OG dioxygenase domain. Tyrosine 216 is a 2-oxoglutarate binding site. The Fe cation site is built by histidine 231, aspartate 233, and histidine 289. Residues arginine 299 and serine 301 each contribute to the 2-oxoglutarate site.

The protein belongs to the iron/ascorbate-dependent oxidoreductase family. It depends on L-ascorbate as a cofactor. Fe(2+) is required as a cofactor. In terms of tissue distribution, expressed at low levels in tubers, underground stems, leaves and petioles.

It carries out the reaction (E)-feruloyl-CoA + 2-oxoglutarate + O2 = (E)-6-hydroxyferuloyl-CoA + succinate + CO2. The protein operates within phenylpropanoid metabolism. Its function is as follows. 2-oxoglutarate (OG)- and Fe(II)-dependent dioxygenase (2OGD) involved in scopoletin biosynthesis. Converts feruloyl CoA into 6'-hydroxyferuloyl CoA, and, at low efficiency, caffeoyl-CoA into 6'-hydroxycaffeate, but has no activity with p-coumaroyl-CoA. The chain is Feruloyl CoA ortho-hydroxylase F6H1-2 from Ipomoea batatas (Sweet potato).